Here is a 690-residue protein sequence, read N- to C-terminus: Amino-acid acetyltransferase, mitochondrial (690 aa).

The disordered stretch occupies residues 62–93 (RFPSVKKPKPPIPRQNQGAVETQSGKENEKPG). A compositionally biased stretch (polar residues) spans 75–84 (RQNQGAVETQ). The N-acetyltransferase domain occupies 508-679 (DGHHLTLDDP…DYEAVCRSIQ (172 aa)).

It belongs to the acetyltransferase family.

Its subcellular location is the mitochondrion. It catalyses the reaction L-glutamate + acetyl-CoA = N-acetyl-L-glutamate + CoA + H(+). It functions in the pathway amino-acid biosynthesis; L-arginine biosynthesis; N(2)-acetyl-L-ornithine from L-glutamate: step 1/4. Functionally, N-acetylglutamate synthase involved in arginine biosynthesis. The protein is Amino-acid acetyltransferase, mitochondrial (arg2) of Talaromyces stipitatus (strain ATCC 10500 / CBS 375.48 / QM 6759 / NRRL 1006) (Penicillium stipitatum).